Here is a 661-residue protein sequence, read N- to C-terminus: Pumilio domain-containing protein C56F2.08c (661 aa).

The region spanning 1-74 (MLYVSNLPVG…GPVQVMLAKP (74 aa)) is the RRM domain. The residue at position 102 (serine 102) is a Phosphoserine. Position 104 is a phosphothreonine (threonine 104). A Phosphoserine modification is found at serine 105. One can recognise a PUM-HD domain in the interval 129-482 (INLDIVDSMI…RLMEEVGMTS (354 aa)). Pumilio repeat units lie at residues 191–226 (SMLDDVAELSSDYLGNTVVQKFFEYCSDPIKEAMLE), 227–263 (RIAPYLAAIGIHKNGTWAAQKIIDVASTEKQMDLIVK), 264–302 (HLRPYTALLYFDQFGNYVAQCCLRFKYPKNTFLFEVMAR), and 374–410 (HLATHLHTTCTHKLASTLIFKLINNKQEPESRNLLLK). Phosphoserine is present on residues serine 482, serine 486, serine 488, and serine 490.

It localises to the cytoplasm. This chain is Pumilio domain-containing protein C56F2.08c, found in Schizosaccharomyces pombe (strain 972 / ATCC 24843) (Fission yeast).